The chain runs to 828 residues: Periplasmic nitrate reductase (828 aa).

The tat-type signal signal peptide spans methionine 1 to alanine 32. Residues isoleucine 37–aspartate 93 enclose the 4Fe-4S Mo/W bis-MGD-type domain. [4Fe-4S] cluster contacts are provided by cysteine 44, cysteine 47, cysteine 51, and cysteine 79. Residues lysine 81, glutamine 148, asparagine 173, cysteine 177, tryptophan 210 to methionine 217, serine 241 to histidine 245, methionine 371, glutamine 375, asparagine 481, serine 507 to aspartate 508, lysine 530, aspartate 557, and threonine 717 to threonine 726 contribute to the Mo-bis(molybdopterin guanine dinucleotide) site. A substrate-binding site is contributed by phenylalanine 793. Mo-bis(molybdopterin guanine dinucleotide) contacts are provided by asparagine 801 and lysine 818.

This sequence belongs to the prokaryotic molybdopterin-containing oxidoreductase family. NasA/NapA/NarB subfamily. In terms of assembly, component of the periplasmic nitrate reductase NapAB complex composed of NapA and NapB. It depends on [4Fe-4S] cluster as a cofactor. Requires Mo-bis(molybdopterin guanine dinucleotide) as cofactor. Post-translationally, predicted to be exported by the Tat system. The position of the signal peptide cleavage has not been experimentally proven.

Its subcellular location is the periplasm. The catalysed reaction is 2 Fe(II)-[cytochrome] + nitrate + 2 H(+) = 2 Fe(III)-[cytochrome] + nitrite + H2O. Its function is as follows. Catalytic subunit of the periplasmic nitrate reductase complex NapAB. Receives electrons from NapB and catalyzes the reduction of nitrate to nitrite. This is Periplasmic nitrate reductase from Aggregatibacter actinomycetemcomitans (Actinobacillus actinomycetemcomitans).